The sequence spans 441 residues: N-acetyl-S-(2-succino)cysteine monooxygenase (441 aa).

Positions 59, 96, 146, 150, 220, and 221 each coordinate FMN.

It belongs to the NtaA/SnaA/DszA monooxygenase family. In terms of assembly, homodimer. Requires FMN as cofactor.

The enzyme catalyses N-acetyl-S-(2-succino)-L-cysteine + NADH + O2 + H(+) = N-acetyl-L-cysteine + oxaloacetate + NAD(+) + H2O. It functions in the pathway amino-acid biosynthesis; L-cysteine biosynthesis. In terms of biological role, catalyzes the oxidative cleavage of the C-S bond of N-acetyl-S-(2-succino)cysteine, forming oxaloacetate and N-acetylcysteine (NAC). Is involved in a S-(2-succino)cysteine (2SC) degradation pathway that allows B.subtilis to grow on 2SC as a sole sulfur source, via its metabolization to cysteine. Shows almost no activity on S-succinylglutathione and 2SC. The polypeptide is N-acetyl-S-(2-succino)cysteine monooxygenase (Bacillus subtilis (strain 168)).